Here is a 435-residue protein sequence, read N- to C-terminus: Transcription activator ACTTR (435 aa).

The segment at residues 16–43 (CDFCTQSKLRCNKNKPSCRRCTIQQQPC) is a DNA-binding region (zn(2)-C6 fungal-type). The disordered stretch occupies residues 48–89 (ARRTGRPPKRPRKANDGQEANEQHGDQDPVTSTPGGSCQQQS). A compositionally biased stretch (basic residues) spans 50-59 (RTGRPPKRPR). The span at 60-74 (KANDGQEANEQHGDQ) shows a compositional bias: basic and acidic residues. Positions 76–89 (PVTSTPGGSCQQQS) are enriched in polar residues.

The protein localises to the nucleus. Transcription factor that regulates the expression of the gene clusters that mediate the biosynthesis of the host-selective toxins (HSTs) ACT-toxins responsible for brown spot of tangerine disease by the tangerine pathotype which affects tangerines and mandarins. ACT-toxins consist of three moieties, 9,10-epoxy-8-hydroxy-9-methyl-decatrienoic acid (EDA), valine and a polyketide. ACT-toxin I is toxic to both citrus and pear; toxin II the 5''-deoxy derivative of ACT-toxin I, is highly toxic to pear and slightly toxic to citrus. On cellular level, ACT-toxins affect plasma membrane of susceptible cells and cause a sudden increase in loss of K(+) after a few minutes of toxin treatment. This is Transcription activator ACTTR from Alternaria alternata (Alternaria rot fungus).